The primary structure comprises 134 residues: ATP synthase epsilon chain (134 aa).

The protein belongs to the ATPase epsilon chain family. As to quaternary structure, F-type ATPases have 2 components, CF(1) - the catalytic core - and CF(0) - the membrane proton channel. CF(1) has five subunits: alpha(3), beta(3), gamma(1), delta(1), epsilon(1). CF(0) has three main subunits: a, b and c.

The protein localises to the cell membrane. In terms of biological role, produces ATP from ADP in the presence of a proton gradient across the membrane. The protein is ATP synthase epsilon chain of Listeria monocytogenes serotype 4b (strain F2365).